Consider the following 738-residue polypeptide: Ent-kaurene synthase-like 1 (738 aa).

Mg(2+) contacts are provided by Asp-487, Asp-491, Asn-631, Asp-632, and Glu-639. Residues 487–491 carry the DDXXD motif motif; the sequence is DDFFD.

Belongs to the terpene synthase family. Mg(2+) serves as cofactor.

The catalysed reaction is ent-copalyl diphosphate = ent-kaur-16-ene + diphosphate. Its pathway is secondary metabolite biosynthesis; terpenoid biosynthesis. Diterpene cyclase involved in the biosynthesis of labdane-related diterpenoids (LRDs) natural products. Catalyzes the cyclization of ent-CDP into ent-kaurene. The polypeptide is Ent-kaurene synthase-like 1 (Ricinus communis (Castor bean)).